A 134-amino-acid polypeptide reads, in one-letter code: MESLSHLVKSTLPNYLSNLPVPDTLGGWFKLSFKDWLALIPPTVVVAGIGYTGYLAFCPAAQDRCSAKKNSGRCNNLIRKHEAKVVDMIDVEDIAEKAAFCRCWKTKNWPYCDGSHGEHNKQTGDNVGPVVVKK.

Residues 1-35 (MESLSHLVKSTLPNYLSNLPVPDTLGGWFKLSFKD) lie on the Lumenal side of the membrane. The helical transmembrane segment at 36 to 58 (WLALIPPTVVVAGIGYTGYLAFC) threads the bilayer. At 59-134 (PAAQDRCSAK…DNVGPVVVKK (76 aa)) the chain is on the cytoplasmic side. [2Fe-2S] cluster-binding residues include Cys-101, Cys-103, Cys-112, and His-116.

This sequence belongs to the CISD protein family. CISD2 subfamily. [2Fe-2S] cluster serves as cofactor.

The protein resides in the endoplasmic reticulum membrane. The chain is CDGSH iron-sulfur domain-containing protein 2 homolog from Drosophila willistoni (Fruit fly).